The primary structure comprises 94 residues: Co-chaperonin GroES (94 aa).

This sequence belongs to the GroES chaperonin family. Heptamer of 7 subunits arranged in a ring. Interacts with the chaperonin GroEL.

The protein resides in the cytoplasm. In terms of biological role, together with the chaperonin GroEL, plays an essential role in assisting protein folding. The GroEL-GroES system forms a nano-cage that allows encapsulation of the non-native substrate proteins and provides a physical environment optimized to promote and accelerate protein folding. GroES binds to the apical surface of the GroEL ring, thereby capping the opening of the GroEL channel. The sequence is that of Co-chaperonin GroES from Alkaliphilus metalliredigens (strain QYMF).